We begin with the raw amino-acid sequence, 253 residues long: Ribonuclease HII (253 aa).

The 192-residue stretch at 32–223 (APVAGLDEAG…FKTSGEEDRI (192 aa)) folds into the RNase H type-2 domain. A divalent metal cation is bound by residues Asp38, Glu39, and Asp130.

This sequence belongs to the RNase HII family. Mn(2+) serves as cofactor. The cofactor is Mg(2+).

The protein localises to the cytoplasm. It carries out the reaction Endonucleolytic cleavage to 5'-phosphomonoester.. Its function is as follows. Endonuclease that specifically degrades the RNA of RNA-DNA hybrids. This chain is Ribonuclease HII, found in Chelativorans sp. (strain BNC1).